A 184-amino-acid chain; its full sequence is ATP synthase subunit b, chloroplastic (184 aa).

Residues 31–49 (IINSSVVLSVLIYFGKGVL) traverse the membrane as a helical segment.

Belongs to the ATPase B chain family. In terms of assembly, F-type ATPases have 2 components, F(1) - the catalytic core - and F(0) - the membrane proton channel. F(1) has five subunits: alpha(3), beta(3), gamma(1), delta(1), epsilon(1). F(0) has four main subunits: a(1), b(1), b'(1) and c(10-14). The alpha and beta chains form an alternating ring which encloses part of the gamma chain. F(1) is attached to F(0) by a central stalk formed by the gamma and epsilon chains, while a peripheral stalk is formed by the delta, b and b' chains.

The protein localises to the plastid. It is found in the chloroplast thylakoid membrane. F(1)F(0) ATP synthase produces ATP from ADP in the presence of a proton or sodium gradient. F-type ATPases consist of two structural domains, F(1) containing the extramembraneous catalytic core and F(0) containing the membrane proton channel, linked together by a central stalk and a peripheral stalk. During catalysis, ATP synthesis in the catalytic domain of F(1) is coupled via a rotary mechanism of the central stalk subunits to proton translocation. Functionally, component of the F(0) channel, it forms part of the peripheral stalk, linking F(1) to F(0). This is ATP synthase subunit b, chloroplastic from Pinus thunbergii (Japanese black pine).